The chain runs to 356 residues: Probable methyltransferase-like protein 15 homolog (356 aa).

Residues 55-57, Asp-74, Phe-103, Asp-126, and Gln-133 contribute to the S-adenosyl-L-methionine site; that span reads GGH.

It belongs to the methyltransferase superfamily. RsmH family.

In terms of biological role, probable S-adenosyl-L-methionine-dependent methyltransferase. The sequence is that of Probable methyltransferase-like protein 15 homolog from Drosophila melanogaster (Fruit fly).